Consider the following 167-residue polypeptide: Probable glutathione peroxidase 8 (167 aa).

C41 is a catalytic residue.

It belongs to the glutathione peroxidase family.

It catalyses the reaction 2 glutathione + H2O2 = glutathione disulfide + 2 H2O. May constitute a glutathione peroxidase-like protective system against oxidative stresses. This is Probable glutathione peroxidase 8 (GPX8) from Arabidopsis thaliana (Mouse-ear cress).